Consider the following 224-residue polypeptide: Phosphoribosylformylglycinamidine synthase subunit PurQ (224 aa).

Positions 3–224 constitute a Glutamine amidotransferase type-1 domain; the sequence is FGVVVFPGSN…GLLEKVVALA (222 aa). Catalysis depends on C86, which acts as the Nucleophile. Active-site residues include H195 and E197.

In terms of assembly, part of the FGAM synthase complex composed of 1 PurL, 1 PurQ and 2 PurS subunits.

The protein localises to the cytoplasm. It carries out the reaction N(2)-formyl-N(1)-(5-phospho-beta-D-ribosyl)glycinamide + L-glutamine + ATP + H2O = 2-formamido-N(1)-(5-O-phospho-beta-D-ribosyl)acetamidine + L-glutamate + ADP + phosphate + H(+). The enzyme catalyses L-glutamine + H2O = L-glutamate + NH4(+). It participates in purine metabolism; IMP biosynthesis via de novo pathway; 5-amino-1-(5-phospho-D-ribosyl)imidazole from N(2)-formyl-N(1)-(5-phospho-D-ribosyl)glycinamide: step 1/2. Its function is as follows. Part of the phosphoribosylformylglycinamidine synthase complex involved in the purines biosynthetic pathway. Catalyzes the ATP-dependent conversion of formylglycinamide ribonucleotide (FGAR) and glutamine to yield formylglycinamidine ribonucleotide (FGAM) and glutamate. The FGAM synthase complex is composed of three subunits. PurQ produces an ammonia molecule by converting glutamine to glutamate. PurL transfers the ammonia molecule to FGAR to form FGAM in an ATP-dependent manner. PurS interacts with PurQ and PurL and is thought to assist in the transfer of the ammonia molecule from PurQ to PurL. The chain is Phosphoribosylformylglycinamidine synthase subunit PurQ from Trichormus variabilis (strain ATCC 29413 / PCC 7937) (Anabaena variabilis).